The sequence spans 185 residues: Small ribosomal subunit protein uS7 (185 aa).

The protein belongs to the universal ribosomal protein uS7 family. As to quaternary structure, part of the 30S ribosomal subunit.

In terms of biological role, one of the primary rRNA binding proteins, it binds directly to 16S rRNA where it nucleates assembly of the head domain of the 30S subunit. Is located at the subunit interface close to the decoding center. This chain is Small ribosomal subunit protein uS7, found in Methanothrix thermoacetophila (strain DSM 6194 / JCM 14653 / NBRC 101360 / PT) (Methanosaeta thermophila).